Here is a 156-residue protein sequence, read N- to C-terminus: Small ribosomal subunit protein uS7 (156 aa).

It belongs to the universal ribosomal protein uS7 family. In terms of assembly, part of the 30S ribosomal subunit. Contacts proteins S9 and S11.

One of the primary rRNA binding proteins, it binds directly to 16S rRNA where it nucleates assembly of the head domain of the 30S subunit. Is located at the subunit interface close to the decoding center, probably blocks exit of the E-site tRNA. The sequence is that of Small ribosomal subunit protein uS7 from Pseudomonas syringae pv. syringae (strain B728a).